The sequence spans 353 residues: Ribosomal RNA small subunit methyltransferase (353 aa).

Over residues M1–K10 the composition is skewed to basic residues. Positions M1–Q23 are disordered. S-adenosyl-L-methionine is bound by residues H35, L37, G62, E83, D111, and N126. A disordered region spans residues A270–K313. Over residues M285–E308 the composition is skewed to acidic residues.

This sequence belongs to the class I-like SAM-binding methyltransferase superfamily. rRNA adenine N(6)-methyltransferase family. Expressed in rapidly dividing tissues, including root meristems and lateral root primordia, developing cotyledons and leaves, petals, anther, pollen grains and silique abscission zone.

The protein resides in the nucleus. It is found in the nucleolus. It catalyses the reaction adenosine(1785)/adenosine(1786) in 18S rRNA + 4 S-adenosyl-L-methionine = N(6)-dimethyladenosine(1785)/N(6)-dimethyladenosine(1786) in 18S rRNA + 4 S-adenosyl-L-homocysteine + 4 H(+). Its function is as follows. N6-adenine methyltransferase which modifies the AA dinucleotide at the plant nuclear 18S rRNA nucleotides A1785 and A1786. Required for generating appropriate patterns of gene expression during root development, including the cell-specific expression of transcriptional regulators involved in root hair and non-hair cells patterning. The protein is Ribosomal RNA small subunit methyltransferase of Arabidopsis thaliana (Mouse-ear cress).